Here is a 245-residue protein sequence, read N- to C-terminus: CMRF35-like molecule 3 (245 aa).

Positions 1 to 18 are cleaved as a signal peptide; sequence MWQFPALLFLFLPGCCTA. The 106-residue stretch at 19–124 folds into the Ig-like V-type domain; the sequence is QDPVTGPEEV…TDPMFKVNVN (106 aa). Topologically, residues 19 to 189 are extracellular; the sequence is QDPVTGPEEV…FIWSLLSSIS (171 aa). Cysteine 40 and cysteine 108 are joined by a disulfide. Important for maintaining surface expression and for interaction with FCER1G regions lie at residues 177 to 182 and 189 to 198; these read NSLFIW and SFLLMVFVVV. A helical transmembrane segment spans residues 190-210; that stretch reads FLLMVFVVVPLLLSMLSAVLW. Topologically, residues 211–245 are cytoplasmic; sequence VNRPQRHYGGGEIGLVETHRSDALDGEKHFPGDEK.

This sequence belongs to the CD300 family. In terms of assembly, interacts with FCER1G; the interaction may be indirect. Interacts with TLR9. In terms of tissue distribution, highly expressed in bone marrow-derived mast cells and macrophages, peripheral blood monocytes and CD11c+ cells, with weaker expression detected in CD11b cells in bone marrow and peripheral blood. Not detected in B220+ cells in bone marrow or spleen, in Thy-1.2+ or CD3+ cells in peripheral blood, spleen or thymus, or in NK1.1+ cells in spleen (at protein level). Widely expressed in various tissues including heart, liver, spleen, lung, kidney, brain, bone marrow, thymus, axillary lymph node and mesenteric lymph node. Highly expressed in macrophage cell lines J774.1 and RAW 264.7 and in mast cell line MC/9. Weak expression detected in B-lineage cell lines WEHI-231 and A20 and in dendritic cell line DC2.4. Not detected in other myeloid cell lines or T-lineage cell lines.

It localises to the cell membrane. The protein localises to the early endosome. It is found in the lysosome. Its function is as follows. Acts as an activating receptor inducing cytokine production in mast cells. Can act as a positive regulator of TLR9 signaling in macrophages, leading to enhanced production of pro-inflammatory cytokines. The polypeptide is CMRF35-like molecule 3 (Mus musculus (Mouse)).